Here is a 512-residue protein sequence, read N- to C-terminus: GMP synthase [glutamine-hydrolyzing] (512 aa).

Residues 7–197 (LVLVVDFGGQ…LFKVAGLKAD (191 aa)) enclose the Glutamine amidotransferase type-1 domain. Cys-84 functions as the Nucleophile in the catalytic mechanism. Catalysis depends on residues His-171 and Glu-173. One can recognise a GMPS ATP-PPase domain in the interval 198–387 (WSMASFAEEK…LGIPHKLVWR (190 aa)). 225 to 231 (SGGVDSS) contributes to the ATP binding site.

In terms of assembly, homodimer.

The enzyme catalyses XMP + L-glutamine + ATP + H2O = GMP + L-glutamate + AMP + diphosphate + 2 H(+). The protein operates within purine metabolism; GMP biosynthesis; GMP from XMP (L-Gln route): step 1/1. Functionally, catalyzes the synthesis of GMP from XMP. In Clostridium novyi (strain NT), this protein is GMP synthase [glutamine-hydrolyzing].